The sequence spans 467 residues: Asparagine--tRNA ligase (467 aa).

Belongs to the class-II aminoacyl-tRNA synthetase family. In terms of assembly, homodimer.

The protein resides in the cytoplasm. It carries out the reaction tRNA(Asn) + L-asparagine + ATP = L-asparaginyl-tRNA(Asn) + AMP + diphosphate + H(+). This chain is Asparagine--tRNA ligase, found in Bacteroides fragilis (strain YCH46).